We begin with the raw amino-acid sequence, 1012 residues long: RAS protein activator like-3 (1012 aa).

3 disordered regions span residues 1–128, 147–196, and 208–229; these read MDPP…TPDV, GNED…QIHN, and KKAK…ALGS. Residues 7 to 21 are compositionally biased toward polar residues; it reads SRASQTQPVAPSPLT. Ser-18 is subject to Phosphoserine. The segment covering 27 to 39 has biased composition (gly residues); it reads SGGGAEKGAGGFR. A compositionally biased stretch (polar residues) spans 50 to 62; the sequence is QSHQETTASSQPA. Ser-51 is subject to Phosphoserine. A compositionally biased stretch (acidic residues) spans 100 to 113; sequence SEPEPENPEPEPEL. Ser-160, Ser-162, Ser-163, and Ser-166 each carry phosphoserine. A compositionally biased stretch (low complexity) spans 160 to 171; sequence SASSESSIHVAS. The span at 175–186 shows a compositional bias: basic and acidic residues; that stretch reads KDPDRTPGKTDP. The 102-residue stretch at 193–294 folds into the PH domain; it reads QIHNVRGLLK…WIEDLRRHFQ (102 aa). Phosphoserine occurs at positions 212, 225, 229, and 232. Thr-235 bears the Phosphothreonine mark. Positions 285–405 constitute a C2 domain; the sequence is WIEDLRRHFQ…APAAGLERWF (121 aa). The region spanning 475-683 is the Ras-GAP domain; sequence GRAQALVTDL…PAMQHFLDQV (209 aa). Residues 752-887 are disordered; sequence PAPRTQGHSS…DKDQALGTHR (136 aa). Phosphoserine is present on residues Ser-788 and Ser-791. The span at 826–841 shows a compositional bias: basic residues; it reads PARRRPSAGPRPRPKG. Residues 889–989 adopt a coiled-coil conformation; that stretch reads VGKLAELQCE…KDTIQNLQLL (101 aa). Positions 990–999 are enriched in polar residues; the sequence is PRTSESQSQP. Positions 990 to 1012 are disordered; that stretch reads PRTSESQSQPVPLKAPCINGDTT.

It is found in the cytoplasm. It localises to the cell cortex. In terms of biological role, functions as a Ras GTPase-activating protein. Plays an important role in the expansion and functions of natural killer T (NKT) cells in the liver by negatively regulating RAS activity and the down-stream ERK signaling pathway. The protein is RAS protein activator like-3 (RASAL3) of Bos taurus (Bovine).